The sequence spans 471 residues: Glutamate--tRNA ligase (471 aa).

The 'HIGH' region signature appears at 9–19 (PSPTGYLHVGG). Residues cysteine 98, cysteine 100, cysteine 125, and histidine 127 each coordinate Zn(2+). Residues 237 to 241 (KLSKR) carry the 'KMSKS' region motif. Residue lysine 240 participates in ATP binding.

This sequence belongs to the class-I aminoacyl-tRNA synthetase family. Glutamate--tRNA ligase type 1 subfamily. Monomer. It depends on Zn(2+) as a cofactor.

Its subcellular location is the cytoplasm. The enzyme catalyses tRNA(Glu) + L-glutamate + ATP = L-glutamyl-tRNA(Glu) + AMP + diphosphate. Its function is as follows. Catalyzes the attachment of glutamate to tRNA(Glu) in a two-step reaction: glutamate is first activated by ATP to form Glu-AMP and then transferred to the acceptor end of tRNA(Glu). The protein is Glutamate--tRNA ligase of Salmonella enteritidis PT4 (strain P125109).